Consider the following 2202-residue polypeptide: Nonribosomal peptide synthetase 5 (2202 aa).

Residues 58–443 (TYAQLDALSD…LLSYDKVDSA (386 aa)) are adenylation 1. Residues 517 to 593 (ERGLGAVESV…NIAAAVVELS (77 aa)) enclose the Carrier 1 domain. Position 554 is an O-(pantetheine 4'-phosphoryl)serine (Ser-554). Positions 625–918 (IAPMTDMQTR…INTLPLAINT (294 aa)) are condensation 1. Residues 1105–1482 (TYREFGRMTE…EVQSTISKLA (378 aa)) form an adenylation 2 region. The region spanning 1563 to 1643 (DLETDTQRVL…DLSLAIDELV (81 aa)) is the Carrier 2 domain. O-(pantetheine 4'-phosphoryl)serine is present on Ser-1602. The tract at residues 1664-1952 (GQLPLSYLEK…FLDRLLLRIQ (289 aa)) is condensation 2. Residues 2103–2129 (PVGLTPSHEGSAELTNGTNKTDSTTGQ) are disordered. Over residues 2115 to 2129 (ELTNGTNKTDSTTGQ) the composition is skewed to polar residues. The 73-residue stretch at 2130–2202 (QELENNLTDV…LELATCAVII (73 aa)) folds into the Carrier 3 domain. Ser-2164 is subject to O-(pantetheine 4'-phosphoryl)serine.

This sequence belongs to the NRP synthetase family.

Nonribosomal peptide synthesis (NRPS) is a key mechanism responsible for the biosynthesis of bioactive metabolites which are potentially contributing to organismal virulence. In Aspergillus fumigatus (strain ATCC MYA-4609 / CBS 101355 / FGSC A1100 / Af293) (Neosartorya fumigata), this protein is Nonribosomal peptide synthetase 5 (NRPS5).